The chain runs to 790 residues: Tumor necrosis factor alpha-induced protein 3 (790 aa).

At A2 the chain carries N-acetylalanine. The tract at residues 58–300 is TRAF-binding; it reads PQFREIIHKA…LTDPENEMKE (243 aa). The OTU domain maps to 92 to 263; that stretch reads LVALKTNGDG…SHHFVPLVTL (172 aa). Residue D100 is part of the active site. Residue C103 is the Nucleophile of the active site. 3 interaction with ubiquitin regions span residues 157 to 159, 190 to 192, and 224 to 227; these read LCY, SLE, and FAPL. The Proton acceptor role is filled by H256. The interval 369–775 is interaction with TNIP1; that stretch reads AQNPMESSLP…ACDHFGNAKC (407 aa). The A20-type 1 zinc finger occupies 381 to 416; it reads SLMDVKCETPNCPFFMSVNTQPLCHECSERRQKNQN. Residues 386-453 form an interaction with RIPK1 region; the sequence is KCETPNCPFF…EPLAWNPEEP (68 aa). 4 residues coordinate Zn(2+): C387, C392, C404, and C407. Residues 415 to 467 form a disordered region; that stretch reads QNKLPKLNSKPGPEGLPGMALGASRGEAYEPLAWNPEEPTGGPHSAPPTAPSP. Phosphoserine is present on S459. A20-type zinc fingers lie at residues 472-507 and 515-548; these read ETTAMKCRSPGCPFTLNVQHNGFCERCHNARQLHAS and HLDPGKCQACLQDVTRTFNGICSTCFKRTTAEAS. Positions 478, 483, 495, 498, 521, 524, 536, and 539 each coordinate Zn(2+). Residues 550-580 form a disordered region; sequence SLSTSLPPSCHQRSKSDPSQLVRSPSPHSCH. Polar residues predominate over residues 566-576; it reads DPSQLVRSPSP. Position 575 is a phosphoserine (S575). The A20-type 4 zinc finger occupies 601 to 636; that stretch reads RTGTSKCRKAGCMYFGTPENKGFCTLCFIEYRENKH. The required for proteasomal degradation of UBE2N and UBE2D3, TRAF6 deubiquitination, and TAX1BP1 interaction with UBE2N stretch occupies residues 605–655; sequence SKCRKAGCMYFGTPENKGFCTLCFIEYRENKHLVAASGKASPTASRFQNTI. The sufficient for inhibitory activity of TNF-induced NF-kappa-B activity stretch occupies residues 606-790; the sequence is KCRKAGCMYF…ECFQFKQMYG (185 aa). Residues C607, C612, C624, and C627 each contribute to the Zn(2+) site. Position 645 is a phosphoserine (S645). The A20-type 5 zinc finger occupies 651-686; it reads FQNTIPCLGRECGTLGSTMFEGYCQKCFIEAQNQRF. Residues C657, C662, C674, and C677 each coordinate Zn(2+). A compositionally biased stretch (basic and acidic residues) spans 689 to 705; the sequence is AKRTEEQLRSSQRRDVP. Residues 689–712 are disordered; sequence AKRTEEQLRSSQRRDVPRTTQSTS. Positions 697-790 are required for lysosomal localization and for TRAF2 lysosomal degradation; sequence RSSQRRDVPR…ECFQFKQMYG (94 aa). 2 A20-type zinc fingers span residues 710–745 and 756–790; these read STSRPKCARASCKNILACRSEELCMECQHPNPRMGP and DPPKQRCWAPACDHFGNAKCNGYCNECFQFKQMYG. Positions 716, 721, 733, 736, 762, 767, 779, and 782 each coordinate Zn(2+).

This sequence belongs to the peptidase C64 family. In terms of assembly, homodimer. Interacts with TNIP1, TAX1BP1 and TRAF2. Interacts with RNF11, ITCH and TAX1BP1 only after TNF stimulation; these interaction are transient and they are lost after 1 hour of stimulation with TNF. Interacts with YWHAZ and YWHAH. Interacts with IKBKG; the interaction is induced by TNF stimulation and by polyubiquitin. Interacts with RIPK1. Interacts with UBE2N; the interaction requires TAX1BP1. Interacts with TRAF6. In terms of processing, proteolytically cleaved by MALT1 upon TCR stimulation; disrupts NF-kappa-B inhibitory function and results in increased IL-2 production. It is proposed that only a fraction of TNFAIP3 colocalized with TCR and CBM complex is cleaved, leaving the main TNFAIP3 pool intact.

Its subcellular location is the cytoplasm. It is found in the nucleus. The protein resides in the lysosome. It catalyses the reaction Thiol-dependent hydrolysis of ester, thioester, amide, peptide and isopeptide bonds formed by the C-terminal Gly of ubiquitin (a 76-residue protein attached to proteins as an intracellular targeting signal).. Ubiquitin-editing enzyme that contains both ubiquitin ligase and deubiquitinase activities. Involved in immune and inflammatory responses signaled by cytokines, such as TNF-alpha and IL-1 beta, or pathogens via Toll-like receptors (TLRs) through terminating NF-kappa-B activity. Essential component of a ubiquitin-editing protein complex, comprising also RNF11, ITCH and TAX1BP1, that ensures the transient nature of inflammatory signaling pathways. In cooperation with TAX1BP1 promotes disassembly of E2-E3 ubiquitin protein ligase complexes in IL-1R and TNFR-1 pathways; affected are at least E3 ligases TRAF6, TRAF2 and BIRC2, and E2 ubiquitin-conjugating enzymes UBE2N and UBE2D3. In cooperation with TAX1BP1 promotes ubiquitination of UBE2N and proteasomal degradation of UBE2N and UBE2D3. Upon TNF stimulation, deubiquitinates 'Lys-63'-polyubiquitin chains on RIPK1 and catalyzes the formation of 'Lys-48'-polyubiquitin chains. This leads to RIPK1 proteasomal degradation and consequently termination of the TNF- or LPS-mediated activation of NF-kappa-B. Deubiquitinates TRAF6 probably acting on 'Lys-63'-linked polyubiquitin. Upon T-cell receptor (TCR)-mediated T-cell activation, deubiquitinates 'Lys-63'-polyubiquitin chains on MALT1 thereby mediating disassociation of the CBM (CARD11:BCL10:MALT1) and IKK complexes and preventing sustained IKK activation. Deubiquitinates NEMO/IKBKG; the function is facilitated by TNIP1 and leads to inhibition of NF-kappa-B activation. Upon stimulation by bacterial peptidoglycans, probably deubiquitinates RIPK2. Can also inhibit I-kappa-B-kinase (IKK) through a non-catalytic mechanism which involves polyubiquitin; polyubiquitin promotes association with IKBKG and prevents IKK MAP3K7-mediated phosphorylation. Targets TRAF2 for lysosomal degradation. In vitro able to deubiquitinate 'Lys-11'-, 'Lys-48'- and 'Lys-63' polyubiquitin chains. Inhibitor of programmed cell death. Has a role in the function of the lymphoid system. Required for LPS-induced production of pro-inflammatory cytokines and IFN beta in LPS-tolerized macrophages. The polypeptide is Tumor necrosis factor alpha-induced protein 3 (TNFAIP3) (Macaca fascicularis (Crab-eating macaque)).